The following is an 87-amino-acid chain: Phosphoribosyl-ATP pyrophosphatase (87 aa).

Belongs to the PRA-PH family.

The protein resides in the cytoplasm. It catalyses the reaction 1-(5-phospho-beta-D-ribosyl)-ATP + H2O = 1-(5-phospho-beta-D-ribosyl)-5'-AMP + diphosphate + H(+). The protein operates within amino-acid biosynthesis; L-histidine biosynthesis; L-histidine from 5-phospho-alpha-D-ribose 1-diphosphate: step 2/9. This is Phosphoribosyl-ATP pyrophosphatase from Salinibacter ruber (strain DSM 13855 / M31).